The following is a 117-amino-acid chain: UPF0344 protein GTNG_0604 (117 aa).

4 helical membrane-spanning segments follow: residues 1-21, 39-59, 61-81, and 97-117; these read MTHA…IAVS, LFYI…ASIS, LYWL…MVLV, and VIAL…FDLF.

Belongs to the UPF0344 family.

It is found in the cell membrane. This is UPF0344 protein GTNG_0604 from Geobacillus thermodenitrificans (strain NG80-2).